Reading from the N-terminus, the 81-residue chain is Kappa-theraphotoxin-Gr2c (81 aa).

Positions 1 to 19 (MKAFFVILGLALLCAYSFA) are cleaved as a signal peptide. A propeptide spanning residues 20–50 (LEEQDQLSLRNDLLTVMFAENSELTPETEER) is cleaved from the precursor. Cystine bridges form between cysteine 52-cysteine 66, cysteine 59-cysteine 71, and cysteine 65-cysteine 75.

Belongs to the neurotoxin 30 (phrixotoxin) family. In terms of tissue distribution, expressed by the venom gland.

The protein resides in the secreted. Inhibits sodium channels Nav1.1/SCN1A (IC(50)=5.7 uM), Nav1.2/SCN2A (IC(50)=12 uM), Nav1.4/SCN4A (IC(50)=4 uM), Nav1.6/SCN8A (IC(50)=6.6 uM), Nav1.7/SCN9A (IC(50)=13.6-1030 nM), potassium channels Kv11.1/KCNH2 (IC(50)=4.7 uM), as well as high-voltage-gated calcium channels Cav1.2/CACNA1C (IC(50)= nM). Also blocks mechanosensitive ion channels (also named stretch-activated channels or SACs) and the hypotonic cell swelling induced calcium increase associated with the activation of such channels. It can thus be useful in treating cardiac ventricular disturbances. Also induces analgesia in mammals. The polypeptide is Kappa-theraphotoxin-Gr2c (Grammostola rosea (Chilean rose tarantula)).